A 258-amino-acid polypeptide reads, in one-letter code: MSSLLDKTRMLNRILQKSGTEPVDFEDICDLLSDVLACNVYIISRKGKILGSKFYSGFECEEVREVVLKENRFPDFYNNKLLNVNETLSNSPNHDKCVFDNLKDCSINNKLSTIVPINGNRERLGTLLLARFDKEFTDEDLILAEYSATIIGLEILRSKQDQIEEEARKKAVVQLAIGTLSYSELEAVEHIFNELDGTEGLLVASKIADKVGITRSVIVNALRKFESAGVIESRSLGMKGTHIRILNDKLLEELKKIK.

The interval Met-1–Leu-156 is GAF domain. The H-T-H motif DNA-binding region spans Ala-204–Arg-223.

This sequence belongs to the CodY family.

The protein resides in the cytoplasm. Functionally, DNA-binding global transcriptional regulator which is involved in the adaptive response to starvation and acts by directly or indirectly controlling the expression of numerous genes in response to nutrient availability. During rapid exponential growth, CodY is highly active and represses genes whose products allow adaptation to nutrient depletion. In Clostridium botulinum (strain Okra / Type B1), this protein is Global transcriptional regulator CodY.